The primary structure comprises 396 residues: Tryptophan synthase beta chain (396 aa).

The residue at position 86 (lysine 86) is an N6-(pyridoxal phosphate)lysine.

Belongs to the TrpB family. As to quaternary structure, tetramer of two alpha and two beta chains. Pyridoxal 5'-phosphate is required as a cofactor.

It catalyses the reaction (1S,2R)-1-C-(indol-3-yl)glycerol 3-phosphate + L-serine = D-glyceraldehyde 3-phosphate + L-tryptophan + H2O. It participates in amino-acid biosynthesis; L-tryptophan biosynthesis; L-tryptophan from chorismate: step 5/5. Its function is as follows. The beta subunit is responsible for the synthesis of L-tryptophan from indole and L-serine. This chain is Tryptophan synthase beta chain, found in Serratia proteamaculans (strain 568).